Reading from the N-terminus, the 75-residue chain is UPF0352 protein VF_1649 (75 aa).

Belongs to the UPF0352 family.

In Aliivibrio fischeri (strain ATCC 700601 / ES114) (Vibrio fischeri), this protein is UPF0352 protein VF_1649.